Here is a 519-residue protein sequence, read N- to C-terminus: Protein tweety homolog 1 (519 aa).

At 1–42 (MTFASFLINFYSVIPRLNFKFHWTNDVFNLEWSSEYFQALAL) the chain is on the extracellular side. A helical membrane pass occupies residues 43 to 63 (VACLGAAVSLLLLVTIIIVWI). Residues 64–82 (CQACHKNETTGKTRRRVRR) lie on the Cytoplasmic side of the membrane. Residues 83–103 (LSTVLFIISVLCFFMLGVCLF) traverse the membrane as a helical segment. Residues 104 to 217 (ANEHVNRGMS…VLSLYESERW (114 aa)) lie on the Extracellular side of the membrane. 3 N-linked (GlcNAc...) asparagine glycosylation sites follow: asparagine 142, asparagine 163, and asparagine 176. A helical transmembrane segment spans residues 218-238 (AFLVILLSITMVVLFTGVVAF). Topologically, residues 239 to 245 (CKQSKKG) are cytoplasmic. A helical membrane pass occupies residues 246-266 (AVVFSAIGFFIFVVVWLLISI). Over 267–395 (SLPLTIALAD…GTCNQSVAGM (129 aa)) the chain is Extracellular. Residues asparagine 328, asparagine 341, asparagine 348, and asparagine 389 are each glycosylated (N-linked (GlcNAc...) asparagine). The helical transmembrane segment at 396-416 (SIYMLSILLLGVFLFILLIVV) threads the bilayer. At 417 to 519 (SKTWNLFSRL…YNNYEDRYNM (103 aa)) the chain is on the cytoplasmic side. Residues 459-485 (YNPRTRDRTEPSTNTTSGTADEPNAPL) form a disordered region.

Belongs to the tweety family.

The protein localises to the cell membrane. Probable chloride channel. The protein is Protein tweety homolog 1 (ttyh-1) of Caenorhabditis elegans.